We begin with the raw amino-acid sequence, 260 residues long: Snake venom serine protease 2 (260 aa).

Positions 1–18 (MVLIRVLANLLILQLFYA) are cleaved as a signal peptide. A propeptide spanning residues 19 to 24 (QKSSEL) is cleaved from the precursor. In terms of domain architecture, Peptidase S1 spans 25-251 (IIGGDECNIN…HLDWIKSIIA (227 aa)). Disulfide bonds link Cys-31–Cys-165, Cys-52–Cys-68, Cys-100–Cys-258, Cys-144–Cys-212, Cys-176–Cys-191, and Cys-202–Cys-227. 2 N-linked (GlcNAc...) asparagine glycosylation sites follow: Asn-123 and Asn-124.

The protein belongs to the peptidase S1 family. Snake venom subfamily. In terms of assembly, monomer. As to expression, expressed by the venom gland.

The protein resides in the secreted. In terms of biological role, snake venom serine protease that may act in the hemostasis system of the prey. This is Snake venom serine protease 2 (TLF2) from Protobothrops flavoviridis (Habu).